Here is a 339-residue protein sequence, read N- to C-terminus: Ribosomal RNA small subunit methyltransferase C (339 aa).

This sequence belongs to the methyltransferase superfamily. RsmC family. As to quaternary structure, monomer.

The protein resides in the cytoplasm. The enzyme catalyses guanosine(1207) in 16S rRNA + S-adenosyl-L-methionine = N(2)-methylguanosine(1207) in 16S rRNA + S-adenosyl-L-homocysteine + H(+). Its function is as follows. Specifically methylates the guanine in position 1207 of 16S rRNA in the 30S particle. This is Ribosomal RNA small subunit methyltransferase C from Photobacterium profundum (strain SS9).